The chain runs to 198 residues: Recombination protein RecR (198 aa).

The C4-type zinc finger occupies 57–72 (CSICGNLTESDPCAIC). Residues 80 to 175 (TTILVVEESK…KVTRLAHGLA (96 aa)) form the Toprim domain.

The protein belongs to the RecR family.

In terms of biological role, may play a role in DNA repair. It seems to be involved in an RecBC-independent recombinational process of DNA repair. It may act with RecF and RecO. This Lactococcus lactis subsp. cremoris (strain SK11) protein is Recombination protein RecR.